Reading from the N-terminus, the 89-residue chain is RNA-binding protein Hfq (89 aa).

In terms of domain architecture, Sm spans 9 to 68; the sequence is DPFLNALRRERVPVSIYLVNGIKLQGQVESFDQFVILLKNTVSQMVYKHAISTVVPARAL.

The protein belongs to the Hfq family. Homohexamer.

In terms of biological role, RNA chaperone that binds small regulatory RNA (sRNAs) and mRNAs to facilitate mRNA translational regulation in response to envelope stress, environmental stress and changes in metabolite concentrations. Also binds with high specificity to tRNAs. This is RNA-binding protein Hfq from Shewanella denitrificans (strain OS217 / ATCC BAA-1090 / DSM 15013).